Here is a 381-residue protein sequence, read N- to C-terminus: Ribosomal lysine N-methyltransferase set11 (381 aa).

The SET domain maps to Pro-23 to Gly-224. An S-adenosyl-L-methionine-binding site is contributed by Tyr-223.

It belongs to the class V-like SAM-binding methyltransferase superfamily. RKM2 family.

Its subcellular location is the cytoplasm. The protein localises to the nucleus. It localises to the nucleolus. Its function is as follows. S-adenosyl-L-methionine-dependent protein-lysine N-methyltransferase that trimethylates 60S ribosomal protein L12 (rpl1201 and rpl1202) at 'Lys-4' and may dimethylate L12 also at 'Lys-40' and 'Lys-41'. Overexpression causes a severe growth defect. Has a role in meiosis. This Schizosaccharomyces pombe (strain 972 / ATCC 24843) (Fission yeast) protein is Ribosomal lysine N-methyltransferase set11 (set11).